The primary structure comprises 83 residues: Small ribosomal subunit protein uS17 (83 aa).

This sequence belongs to the universal ribosomal protein uS17 family. As to quaternary structure, part of the 30S ribosomal subunit.

Its function is as follows. One of the primary rRNA binding proteins, it binds specifically to the 5'-end of 16S ribosomal RNA. The polypeptide is Small ribosomal subunit protein uS17 (Chlamydia abortus (strain DSM 27085 / S26/3) (Chlamydophila abortus)).